A 611-amino-acid chain; its full sequence is Probable methyltransferase PMT1 (611 aa).

Residues 1–11 (MRGRSEGGKKK) are Cytoplasmic-facing. The helical; Signal-anchor for type II membrane protein transmembrane segment at 12 to 32 (PVIVLLCVASVVLVFVYLFFG) threads the bilayer. The Lumenal segment spans residues 33-611 (SSNHKAIEYG…LTSESLRDLE (579 aa)). Asparagine 345 carries an N-linked (GlcNAc...) asparagine glycan.

This sequence belongs to the methyltransferase superfamily.

It localises to the golgi apparatus membrane. This chain is Probable methyltransferase PMT1, found in Arabidopsis thaliana (Mouse-ear cress).